The sequence spans 453 residues: AP-4 complex subunit mu-1 (453 aa).

The region spanning 184-452 is the MHD domain; it reads KNEVFLDVVE…LSHSDAYVIR (269 aa).

Belongs to the adaptor complexes medium subunit family. In terms of assembly, adaptor protein complex 4 (AP-4) is a heterotetramer composed of two large adaptins (epsilon-type subunit AP4E1 and beta-type subunit AP4B1), a medium adaptin (mu-type subunit AP4M1) and a small adaptin (sigma-type AP4S1). Interacts with tyrosine-based sorting signals on the cytoplasmic tail of cargo proteins such as APP, ATG9A, LAMP2 and NAGPA. Interacts with the C-terminal domain of GRID2. Interacts with GRIA1 and GRIA2; the interaction is indirect via CACNG3. Interacts with CACNG3; CACNG3 associates GRIA1 and GRIA2 with the adaptor protein complex 4 (AP-4) to target them to the somatodendritic compartment of neurons. Interacts with HOOK1 and HOOK2; the interactions are direct, mediate the interaction between FTS-Hook-FHIP (FHF) complex and AP-4 and the perinuclear distribution of AP-4. Ubiquitous. Highly expressed in testis and lowly expressed in brain and lung.

It is found in the golgi apparatus. Its subcellular location is the trans-Golgi network membrane. The protein localises to the early endosome. Its function is as follows. Component of the adaptor protein complex 4 (AP-4). Adaptor protein complexes are vesicle coat components involved both in vesicle formation and cargo selection. They control the vesicular transport of proteins in different trafficking pathways. AP-4 forms a non clathrin-associated coat on vesicles departing the trans-Golgi network (TGN) and may be involved in the targeting of proteins from the trans-Golgi network (TGN) to the endosomal-lysosomal system. It is also involved in protein sorting to the basolateral membrane in epithelial cells and the proper asymmetric localization of somatodendritic proteins in neurons. Within AP-4, the mu-type subunit AP4M1 is directly involved in the recognition and binding of tyrosine-based sorting signals found in the cytoplasmic part of cargos. The adaptor protein complex 4 (AP-4) may also recognize other types of sorting signal. The protein is AP-4 complex subunit mu-1 of Homo sapiens (Human).